Here is a 194-residue protein sequence, read N- to C-terminus: Inosine triphosphate pyrophosphatase (194 aa).

8–13 contacts ITP; the sequence is TGNANK. Glu47 is a Mg(2+) binding site. ITP contacts are provided by residues Lys59, 75-76, Lys92, 151-154, Lys174, and 179-180; these read DT, FGWD, and HR.

This sequence belongs to the HAM1 NTPase family. Homodimer. Mg(2+) is required as a cofactor. Requires Mn(2+) as cofactor.

It localises to the cytoplasm. The protein localises to the nucleus. It carries out the reaction ITP + H2O = IMP + diphosphate + H(+). The enzyme catalyses dITP + H2O = dIMP + diphosphate + H(+). It catalyses the reaction XTP + H2O = XMP + diphosphate + H(+). Pyrophosphatase that hydrolyzes non-canonical purine nucleotides such as inosine triphosphate (ITP), deoxyinosine triphosphate (dITP) or xanthosine 5'-triphosphate (XTP) to their respective monophosphate derivatives. The enzyme does not distinguish between the deoxy- and ribose forms. Probably excludes non-canonical purines from RNA and DNA precursor pools, thus preventing their incorporation into RNA and DNA and avoiding chromosomal lesions. This Scheffersomyces stipitis (strain ATCC 58785 / CBS 6054 / NBRC 10063 / NRRL Y-11545) (Yeast) protein is Inosine triphosphate pyrophosphatase.